A 565-amino-acid polypeptide reads, in one-letter code: Mannosyl-oligosaccharide 1,2-alpha-mannosidase (565 aa).

The cysteines at positions 320 and 363 are disulfide-linked. Glu378 acts as the Proton donor in catalysis. Ca(2+) is bound at residue Thr501. 2 stretches are compositionally biased toward basic and acidic residues: residues 526–538 (NEKA…KVID) and 550–565 (KSAD…EIAG). The segment at 526–565 (NEKAQMRESKVIDKSNLPEAQPVDKSADQEAKEIIEEIAG) is disordered.

It belongs to the glycosyl hydrolase 47 family. Requires Ca(2+) as cofactor.

It catalyses the reaction N(4)-(alpha-D-Man-(1-&gt;2)-alpha-D-Man-(1-&gt;2)-alpha-D-Man-(1-&gt;3)-[alpha-D-Man-(1-&gt;2)-alpha-D-Man-(1-&gt;3)-[alpha-D-Man-(1-&gt;2)-alpha-D-Man-(1-&gt;6)]-alpha-D-Man-(1-&gt;6)]-beta-D-Man-(1-&gt;4)-beta-D-GlcNAc-(1-&gt;4)-beta-D-GlcNAc)-L-asparaginyl-[protein] (N-glucan mannose isomer 9A1,2,3B1,2,3) + 4 H2O = N(4)-(alpha-D-Man-(1-&gt;3)-[alpha-D-Man-(1-&gt;3)-[alpha-D-Man-(1-&gt;6)]-alpha-D-Man-(1-&gt;6)]-beta-D-Man-(1-&gt;4)-beta-D-GlcNAc-(1-&gt;4)-beta-D-GlcNAc)-L-asparaginyl-[protein] (N-glucan mannose isomer 5A1,2) + 4 beta-D-mannose. The enzyme catalyses N(4)-(alpha-D-Man-(1-&gt;2)-alpha-D-Man-(1-&gt;2)-alpha-D-Man-(1-&gt;3)-[alpha-D-Man-(1-&gt;3)-[alpha-D-Man-(1-&gt;2)-alpha-D-Man-(1-&gt;6)]-alpha-D-Man-(1-&gt;6)]-beta-D-Man-(1-&gt;4)-beta-D-GlcNAc-(1-&gt;4)-beta-D-GlcNAc)-L-asparaginyl-[protein] (N-glucan mannose isomer 8A1,2,3B1,3) + 3 H2O = N(4)-(alpha-D-Man-(1-&gt;3)-[alpha-D-Man-(1-&gt;3)-[alpha-D-Man-(1-&gt;6)]-alpha-D-Man-(1-&gt;6)]-beta-D-Man-(1-&gt;4)-beta-D-GlcNAc-(1-&gt;4)-beta-D-GlcNAc)-L-asparaginyl-[protein] (N-glucan mannose isomer 5A1,2) + 3 beta-D-mannose. It participates in protein modification; protein glycosylation. Its function is as follows. Involved in the maturation of Asn-linked oligosaccharides. Trim a single alpha-1,2-linked mannose residue from Man(9)GlcNAc(2) to produce Man(8)GlcNAc(2). In Candida albicans (Yeast), this protein is Mannosyl-oligosaccharide 1,2-alpha-mannosidase (MNS1).